The sequence spans 269 residues: 3-methyl-2-oxobutanoate hydroxymethyltransferase (269 aa).

2 residues coordinate Mg(2+): D43 and D82. Residues 43–44 (DS), D82, and K110 each bind 3-methyl-2-oxobutanoate. E112 serves as a coordination point for Mg(2+). The active-site Proton acceptor is the E179.

Belongs to the PanB family. Homodecamer; pentamer of dimers. Requires Mg(2+) as cofactor.

Its subcellular location is the cytoplasm. The enzyme catalyses 3-methyl-2-oxobutanoate + (6R)-5,10-methylene-5,6,7,8-tetrahydrofolate + H2O = 2-dehydropantoate + (6S)-5,6,7,8-tetrahydrofolate. It functions in the pathway cofactor biosynthesis; (R)-pantothenate biosynthesis; (R)-pantoate from 3-methyl-2-oxobutanoate: step 1/2. Its function is as follows. Catalyzes the reversible reaction in which hydroxymethyl group from 5,10-methylenetetrahydrofolate is transferred onto alpha-ketoisovalerate to form ketopantoate. The chain is 3-methyl-2-oxobutanoate hydroxymethyltransferase from Acinetobacter baylyi (strain ATCC 33305 / BD413 / ADP1).